The sequence spans 438 residues: uncharacterized protein (438 aa).

Lys273 carries the N6-(pyridoxal phosphate)lysine modification.

This sequence belongs to the class-III pyridoxal-phosphate-dependent aminotransferase family. It depends on pyridoxal 5'-phosphate as a cofactor.

It localises to the mitochondrion. This is an uncharacterized protein from Schizosaccharomyces pombe (strain 972 / ATCC 24843) (Fission yeast).